The primary structure comprises 142 residues: Maximins y/H11 (142 aa).

The first 18 residues, 1–18 (MNFKYIVAVSFLITSGYA), serve as a signal peptide directing secretion. Positions 19–43 (ESVKNDEQSLSQRDVLEEESLREIR) are excised as a propeptide. A Phenylalanine amide modification is found at Phe68. The propeptide occupies 72–121 (SAEDHEVMKRLEAVIRDLDSLDHPEEASERETRGFNQEEIANLFTKKEKR). The residue at position 141 (Ile141) is an Isoleucine amide.

This sequence belongs to the bombinin family. Expressed by the skin glands.

The protein resides in the secreted. Maximin-y shows antimicrobial activity against bacteria and against the fungus C.albicans. It has little hemolytic activity. In terms of biological role, maximin-H11 shows antimicrobial activity against bacteria and against the fungus C.albicans. Shows strong hemolytic activity. This Bombina maxima (Giant fire-bellied toad) protein is Maximins y/H11.